A 292-amino-acid polypeptide reads, in one-letter code: CCR4-NOT transcription complex subunit 8 (292 aa).

Positions 40, 42, 161, and 230 each coordinate a divalent metal cation.

Belongs to the CAF1 family. As to quaternary structure, component of the CCR4-NOT complex; distinct complexes seem to exist that differ in the participation of probably mutually exclusive catalytic subunits; the complex contains two deadenylase subunits, CNOT6 or CNOT6L, and CNOT7 or CNOT8. In the complex interacts directly with CNOT1. Interacts with BTG1, BTG2 and TOB1. Interacts with BTG4.

Its subcellular location is the cytoplasm. The protein localises to the nucleus. The enzyme catalyses Exonucleolytic cleavage of poly(A) to 5'-AMP.. In terms of biological role, has 3'-5' poly(A) exoribonuclease activity for synthetic poly(A) RNA substrate. Its function seems to be partially redundant with that of CNOT7. Catalytic component of the CCR4-NOT complex which is linked to various cellular processes including bulk mRNA degradation, miRNA-mediated repression, translational repression during translational initiation and general transcription regulation. During miRNA-mediated repression the complex also seems to act as translational repressor during translational initiation. Additional complex functions may be a consequence of its influence on mRNA expression. Associates with members of the BTG family such as TOB1 and BTG2 and is required for their anti-proliferative activity. The chain is CCR4-NOT transcription complex subunit 8 (CNOT8) from Homo sapiens (Human).